The following is a 146-amino-acid chain: 3-dehydroquinate dehydratase (146 aa).

Catalysis depends on tyrosine 22, which acts as the Proton acceptor. Residues asparagine 74, histidine 80, and aspartate 87 each contribute to the substrate site. Residue histidine 100 is the Proton donor of the active site. Substrate contacts are provided by residues 101–102 (LS) and arginine 111.

It belongs to the type-II 3-dehydroquinase family. Homododecamer.

The catalysed reaction is 3-dehydroquinate = 3-dehydroshikimate + H2O. It functions in the pathway metabolic intermediate biosynthesis; chorismate biosynthesis; chorismate from D-erythrose 4-phosphate and phosphoenolpyruvate: step 3/7. Catalyzes a trans-dehydration via an enolate intermediate. The chain is 3-dehydroquinate dehydratase from Clostridium perfringens (strain 13 / Type A).